The chain runs to 478 residues: PTS system mannitol-specific EIICB component (478 aa).

Residues 1 to 29 (MQQQEQQQGGMKVKVQRFGSYLSGMIMPN) are Cytoplasmic-facing. The PTS EIIC type-2 domain occupies 18–347 (FGSYLSGMIM…VILKSSKASE (330 aa)). A helical membrane pass occupies residues 30–51 (IGAFIAWGIITALFIPAGWFPN). Over 52-55 (EQLN) the chain is Extracellular. The chain crosses the membrane as a helical span at residues 56 to 76 (TLVSPMITYLLPLLIAYTGGK). Residues 77–139 (MIYDHRGGVV…QGFEMLINNF (63 aa)) are Cytoplasmic-facing. A helical membrane pass occupies residues 140 to 161 (TAGIVGAALTILAFYAIGPVVL). The Extracellular portion of the chain corresponds to 162-170 (TLNKLLAAG). The chain crosses the membrane as a helical span at residues 171–191 (VEVIVHANLLPVASVFVEPAK). The Cytoplasmic portion of the chain corresponds to 192–278 (VLFLNNAINH…ILMKPALILA (87 aa)). A helical transmembrane segment spans residues 279–298 (AIAGGASGLLTFTIFNAGLV). At 299-318 (AAASPGSIIALMAMTPRGGY) the chain is on the extracellular side. A helical transmembrane segment spans residues 319-340 (FGVLAGVLVAAAVSFIVSAVIL). Over 341 to 478 (KSSKASEEDL…YDELIEKLKK (138 aa)) the chain is Cytoplasmic. The PTS EIIB type-2 domain maps to 390 to 478 (NKIIFACDAG…YDELIEKLKK (89 aa)). Cys-396 serves as the catalytic Phosphocysteine intermediate; for EIIB activity. The residue at position 396 (Cys-396) is a Phosphocysteine; by EIIA.

As to quaternary structure, homodimer.

The protein localises to the cell membrane. It catalyses the reaction D-mannitol(out) + N(pros)-phospho-L-histidyl-[protein] = D-mannitol 1-phosphate(in) + L-histidyl-[protein]. Functionally, the phosphoenolpyruvate-dependent sugar phosphotransferase system (sugar PTS), a major carbohydrate active transport system, catalyzes the phosphorylation of incoming sugar substrates concomitantly with their translocation across the cell membrane. The enzyme II CmtAB PTS system is involved in D-mannitol transport. The sequence is that of PTS system mannitol-specific EIICB component from Bacillus subtilis (strain 168).